The following is an 816-amino-acid chain: Neuroligin-4, Y-linked (816 aa).

The signal sequence occupies residues 1–43 (MLRPQGLLWLPLLFTSVCVMLNSNVLLWITALAIKFTLIDSQA). Residues 44 to 676 (QYPVVNTNYG…TKRDYSTELS (633 aa)) are Extracellular-facing. N102 carries N-linked (GlcNAc...) asparagine glycosylation. 2 disulfide bridges follow: C110–C146 and C306–C317. Residues 359–364 (QGEFLN) form an interaction with NRXN1 region. C476 and C510 are joined by a disulfide. N-linked (GlcNAc...) asparagine glycosylation is present at N511. Positions 636 to 659 (TKRPAITPANNPKHSKDPHKTGPE) are disordered. A compositionally biased stretch (basic and acidic residues) spans 649-658 (HSKDPHKTGP). The chain crosses the membrane as a helical span at residues 677-697 (VTIAVGASLLFLNILAFAALY). The Cytoplasmic portion of the chain corresponds to 698 to 816 (YKKDKRRHET…LPHGHSTTRV (119 aa)). S712 carries the post-translational modification Phosphoserine.

It belongs to the type-B carboxylesterase/lipase family. Homodimer. Interacts with NRXN1 in a calcium-dependent manner. Interaction with neurexins is mediated by heparan sulfate glycan modification on neurexin. Interacts through its C-terminus with DLG4/PSD-95 third PDZ domain. In terms of tissue distribution, expressed in fetal and adult brain, prostate and testis.

The protein localises to the cell membrane. Its subcellular location is the postsynaptic density membrane. Functionally, cell surface protein involved in cell-cell-interactions via its interactions with neurexin family members. This is Neuroligin-4, Y-linked (NLGN4Y) from Homo sapiens (Human).